The chain runs to 395 residues: MKRFLLCSFALVLLYPAGIDMYLVGLPRIAVDLNASESQLHIAFSVYLAGMATAMLFAGKIADQSGRKPVAIVGAIVFMMASLLCSRASEGSLFLSGRFLQGIGAGGCYVVAFAILRDTLDEHRRAKVLSLLNGITCIVPVLAPVVGHLIMLRFPWQSLFYTMSAMGIIVGLLSLFILRETRPVRLAPRDLSRSSPAAESLINRFFVSRLAITTLSVSVILTFVNASPVLLMEVMGFSRGDYAITMALTAGVSMVVSFSTPFALGLFKPRTLMLVSQGLFLTAGVTLSLAHTNTVTLFGLTLICAGFSVGFGVAMSQALGPFSLRAGVASSTLGIAQVCGSSLWIWLAAILGISAMNMLIGILIGCSIVSILLIFSVAPNRSVAEHEEIPYQSRP.

Topologically, residues 1–3 (MKR) are cytoplasmic. The chain crosses the membrane as a helical span at residues 4–24 (FLLCSFALVLLYPAGIDMYLV). The Periplasmic portion of the chain corresponds to 25–41 (GLPRIAVDLNASESQLH). The chain crosses the membrane as a helical span at residues 42–62 (IAFSVYLAGMATAMLFAGKIA). The Cytoplasmic segment spans residues 63–68 (DQSGRK). The chain crosses the membrane as a helical span at residues 69 to 89 (PVAIVGAIVFMMASLLCSRAS). Residues 90–92 (EGS) are Periplasmic-facing. The chain crosses the membrane as a helical span at residues 93–113 (LFLSGRFLQGIGAGGCYVVAF). Topologically, residues 114–130 (AILRDTLDEHRRAKVLS) are cytoplasmic. The helical transmembrane segment at 131–151 (LLNGITCIVPVLAPVVGHLIM) threads the bilayer. Over 152-157 (LRFPWQ) the chain is Periplasmic. A helical membrane pass occupies residues 158 to 178 (SLFYTMSAMGIIVGLLSLFIL). At 179-216 (RETRPVRLAPRDLSRSSPAAESLINRFFVSRLAITTLS) the chain is on the cytoplasmic side. Residues 217–237 (VSVILTFVNASPVLLMEVMGF) form a helical membrane-spanning segment. The Periplasmic segment spans residues 238-246 (SRGDYAITM). The helical transmembrane segment at 247 to 267 (ALTAGVSMVVSFSTPFALGLF) threads the bilayer. Residues 268–270 (KPR) are Cytoplasmic-facing. The chain crosses the membrane as a helical span at residues 271 to 291 (TLMLVSQGLFLTAGVTLSLAH). The Periplasmic segment spans residues 292 to 294 (TNT). The chain crosses the membrane as a helical span at residues 295–315 (VTLFGLTLICAGFSVGFGVAM). Topologically, residues 316-332 (SQALGPFSLRAGVASST) are cytoplasmic. Residues 333–353 (LGIAQVCGSSLWIWLAAILGI) form a helical membrane-spanning segment. At 354 to 357 (SAMN) the chain is on the periplasmic side. The helical transmembrane segment at 358–378 (MLIGILIGCSIVSILLIFSVA) threads the bilayer. Over 379–395 (PNRSVAEHEEIPYQSRP) the chain is Cytoplasmic.

The protein belongs to the major facilitator superfamily. DHA1 family. MdtL (TC 2.A.1.2.22) subfamily.

Its subcellular location is the cell inner membrane. This Salmonella choleraesuis (strain SC-B67) protein is Multidrug resistance protein MdtL (mdtL).